Reading from the N-terminus, the 494-residue chain is ATP synthase subunit alpha 1 (494 aa).

Belongs to the ATPase alpha/beta chains family. F-type ATPases have 2 components, CF(1) - the catalytic core - and CF(0) - the membrane proton channel. CF(1) has five subunits: alpha(3), beta(3), gamma(1), delta(1), epsilon(1). CF(0) has three main subunits: a(1), b(2) and c(9-12). The alpha and beta chains form an alternating ring which encloses part of the gamma chain. CF(1) is attached to CF(0) by a central stalk formed by the gamma and epsilon chains, while a peripheral stalk is formed by the delta and b chains.

It localises to the cell inner membrane. The enzyme catalyses ATP + H2O + 4 H(+)(in) = ADP + phosphate + 5 H(+)(out). Functionally, produces ATP from ADP in the presence of a proton gradient across the membrane. The alpha chain is a regulatory subunit. The sequence is that of ATP synthase subunit alpha 1 from Hahella chejuensis (strain KCTC 2396).